Reading from the N-terminus, the 196-residue chain is Probable phosphoheptose isomerase (196 aa).

One can recognise an SIS domain in the interval 43–196; the sequence is IVNVFNSGGK…MICSVIDSYY (154 aa). 58-60 is a binding site for substrate; sequence NGG. 2 residues coordinate Zn(2+): His67 and Glu71. Substrate is bound by residues Glu71, 100–101, 126–128, Ser131, and Gln178; these read ND and STS. Gln178 and His186 together coordinate Zn(2+).

This sequence belongs to the SIS family. GmhA subfamily. Zn(2+) is required as a cofactor.

Its subcellular location is the cytoplasm. It carries out the reaction 2 D-sedoheptulose 7-phosphate = D-glycero-alpha-D-manno-heptose 7-phosphate + D-glycero-beta-D-manno-heptose 7-phosphate. It functions in the pathway carbohydrate biosynthesis; D-glycero-D-manno-heptose 7-phosphate biosynthesis; D-glycero-alpha-D-manno-heptose 7-phosphate and D-glycero-beta-D-manno-heptose 7-phosphate from sedoheptulose 7-phosphate: step 1/1. Its function is as follows. Catalyzes the isomerization of sedoheptulose 7-phosphate in D-glycero-D-manno-heptose 7-phosphate. The protein is Probable phosphoheptose isomerase of Thermoplasma volcanium (strain ATCC 51530 / DSM 4299 / JCM 9571 / NBRC 15438 / GSS1).